A 306-amino-acid chain; its full sequence is MEVTFFGTSAGLPTKERNTQAIALNLEPYSNSIWLFDVGEGTQHQILHHAIKLGKVTHIFITHMHGDHIFGLPGLLSSRSFQGGEQKPLTLVGPKGIKAYVEMSMNLSESHLNYPITYIEIDDHLTYHHDGFTVEAHLLNHGIPSYGYRVMAPETTGTINVEALKNIGLEPGPKYQEVKSHDTFEHNGQVYQSKDFRGESKQGPVVAIFGDTKPCSNERVISRDADVMVHEATYIDGEKHLANNYHHSHIEDVFALIKEANVKRTLITHLSNRYNTEDINEIYQTLIQNEDTPNFNFVKDFDSFKI.

Positions 63, 65, 67, 68, 141, 211, and 269 each coordinate Zn(2+). Aspartate 67 serves as the catalytic Proton acceptor.

It belongs to the RNase Z family. As to quaternary structure, homodimer. Requires Zn(2+) as cofactor.

The enzyme catalyses Endonucleolytic cleavage of RNA, removing extra 3' nucleotides from tRNA precursor, generating 3' termini of tRNAs. A 3'-hydroxy group is left at the tRNA terminus and a 5'-phosphoryl group is left at the trailer molecule.. Functionally, zinc phosphodiesterase, which displays some tRNA 3'-processing endonuclease activity. Probably involved in tRNA maturation, by removing a 3'-trailer from precursor tRNA. This is Ribonuclease Z from Staphylococcus aureus (strain USA300).